Reading from the N-terminus, the 424-residue chain is Transcription regulator spe-44 (424 aa).

The region spanning 65–150 is the SAND domain; sequence PLQITIPEGD…RTHMEAMTID (86 aa). Disordered regions lie at residues 178 to 228 and 371 to 394; these read ARKS…KPRQ and EHSVKYQPRTSSSSQESLHTAREF. A compositionally biased stretch (basic and acidic residues) spans 192–210; sequence YEIENEMAGKEADNDDNRK. Positions 378 to 388 are enriched in polar residues; it reads PRTSSSSQESL.

The protein resides in the chromosome. It localises to the nucleus. Its function is as follows. Transcription factor which controls spermatogenesis and sperm cell fate by regulation of sperm gene expression. This Caenorhabditis elegans protein is Transcription regulator spe-44.